Reading from the N-terminus, the 205-residue chain is Outer-membrane lipoprotein LolB (205 aa).

The signal sequence occupies residues 1-17 (MFLRHCITFTLIALLAG). A lipid anchor (N-palmitoyl cysteine) is attached at C18. C18 carries the S-diacylglycerol cysteine lipid modification.

Belongs to the LolB family. Monomer.

It is found in the cell outer membrane. Its function is as follows. Plays a critical role in the incorporation of lipoproteins in the outer membrane after they are released by the LolA protein. The sequence is that of Outer-membrane lipoprotein LolB from Pseudomonas putida (strain GB-1).